We begin with the raw amino-acid sequence, 207 residues long: Dephospho-CoA kinase (207 aa).

The segment covering 1 to 11 (MTRSPAPSSPT) has biased composition (polar residues). The tract at residues 1-21 (MTRSPAPSSPTHPRRLGLTGS) is disordered. The DPCK domain occupies 15-207 (RLGLTGSIGA…DAALRQLEIT (193 aa)). 23 to 28 (GAGKST) is a binding site for ATP.

This sequence belongs to the CoaE family.

It is found in the cytoplasm. The enzyme catalyses 3'-dephospho-CoA + ATP = ADP + CoA + H(+). The protein operates within cofactor biosynthesis; coenzyme A biosynthesis; CoA from (R)-pantothenate: step 5/5. Catalyzes the phosphorylation of the 3'-hydroxyl group of dephosphocoenzyme A to form coenzyme A. The chain is Dephospho-CoA kinase from Deinococcus radiodurans (strain ATCC 13939 / DSM 20539 / JCM 16871 / CCUG 27074 / LMG 4051 / NBRC 15346 / NCIMB 9279 / VKM B-1422 / R1).